A 224-amino-acid chain; its full sequence is MITKEDIVADVVTDYPKSADIFRNAGIDFCCGGQESIASAVNHKPNIDLNSLLNKLNHIDNTEGNSTINPKFLNVESLIQYIQSAYHETLKEEFKNLTPYMTKLAKVHGPSHPYLLKLQDLYREFRDSMLDHIRKEDEEDFPKLIQYSQGQDVQNIKIILEDLINDHEDTGQLLNVMNQLTSDYQTPEEACGTWKLVYQRLQNIERQTHQHVHLENHVLFKKVS.

It belongs to the RIC family. ScdA subfamily. In terms of assembly, homodimer.

It localises to the cytoplasm. Functionally, di-iron-containing protein involved in the repair of iron-sulfur clusters damaged by oxidative and nitrosative stress conditions. This is Iron-sulfur cluster repair protein ScdA from Staphylococcus epidermidis (strain ATCC 35984 / DSM 28319 / BCRC 17069 / CCUG 31568 / BM 3577 / RP62A).